A 233-amino-acid polypeptide reads, in one-letter code: Glucosamine-6-phosphate deaminase (233 aa).

Asp-62 serves as the catalytic Proton acceptor; for enolization step. The For ring-opening step role is filled by Asn-128. His-130 acts as the Proton acceptor; for ring-opening step in catalysis. The For ring-opening step role is filled by Glu-135.

Belongs to the glucosamine/galactosamine-6-phosphate isomerase family. NagB subfamily.

It catalyses the reaction alpha-D-glucosamine 6-phosphate + H2O = beta-D-fructose 6-phosphate + NH4(+). The protein operates within amino-sugar metabolism; N-acetylneuraminate degradation; D-fructose 6-phosphate from N-acetylneuraminate: step 5/5. Catalyzes the reversible isomerization-deamination of glucosamine 6-phosphate (GlcN6P) to form fructose 6-phosphate (Fru6P) and ammonium ion. This Enterococcus faecalis (strain ATCC 700802 / V583) protein is Glucosamine-6-phosphate deaminase.